The primary structure comprises 226 residues: Amelogenin (226 aa).

Positions 1-16 (MGTWILFACLLGTAFA) are cleaved as a signal peptide. Phosphoserine is present on S32. The disordered stretch occupies residues 86-196 (QQHPPSHTTL…LPPQQALPPM (111 aa)). Low complexity-rich tracts occupy residues 88 to 120 (HPPS…MPVP) and 137 to 182 (PTSQ…SPLH). A compositionally biased stretch (pro residues) spans 183–192 (PIQPLPPQQA).

The protein belongs to the amelogenin family.

It is found in the secreted. The protein resides in the extracellular space. Its subcellular location is the extracellular matrix. In terms of biological role, plays a role in the biomineralization of teeth. Seems to regulate the formation of crystallites during the secretory stage of tooth enamel development. Thought to play a major role in the structural organization and mineralization of developing enamel. The chain is Amelogenin (AMEL) from Cavia porcellus (Guinea pig).